Consider the following 142-residue polypeptide: Small ribosomal subunit protein uS9c (142 aa).

The protein belongs to the universal ribosomal protein uS9 family.

The protein localises to the plastid. The protein resides in the chloroplast. The protein is Small ribosomal subunit protein uS9c (rps9) of Stigeoclonium helveticum (Green alga).